A 528-amino-acid chain; its full sequence is Drimenol cyclase drtB (528 aa).

This sequence belongs to the HAD-like hydrolase superfamily.

The catalysed reaction is (2E,6E)-farnesyl diphosphate + H2O = (5S,9S,10S)-drim-7-en-11-ol + diphosphate. Its pathway is secondary metabolite biosynthesis; terpenoid biosynthesis. In terms of biological role, drimenol cyclase; part of the gene cluster that mediates the biosynthesis of various drimane-type sesquiterpene esters, compounds that exhibit diverse biological activities and are widely present in eukaryotes. The pathway begins with the synthesis of the backbone drimenol by the terpene cyclase drtB using farnesyl pyrophosphate (FPP) as substrate. The cytochrome P450 monooxygenase drtD is then responsible for the hydroxylations at C-6, C-9 and C-12, as well as the oxidation of hydroxyl groups at C-6 and C-11 to a ketone and an aldehyde, respectively. Then, the biosynthesis can go in two directions, either the hydroxylated drimenol is further hydroxylated at C-2 and C-3 by an enzyme(s) not associated with the drt cluster, or the FAD-binding oxidoreductase drtC further oxidizes C-11 or C-12 to form the butyrolactone ring. DrtB, drtD and drtC are solely responsible for the formation of the different drimane structures observed during drimane sesquiterpenes biosynthesis. The polyketide synthase drtA synthesizes different lengths (C6 and C8) of PKS chains, which are then oxidized to varying degrees by the short-chain dehydrogenase drtF. Finally, these PKS chains are transferred onto drimane sesquiterpenes by the acyltransferase drtE, forming the sesquiterpene esters. In addition to the different fatty acyl-CoA chains produced by drtA, drtE is also able to use cinnamoyl-CoA as a substrate. The polypeptide is Drimenol cyclase drtB (Aspergillus calidoustus).